An 802-amino-acid polypeptide reads, in one-letter code: ATP-dependent zinc metalloprotease FTSH 7, chloroplastic (802 aa).

Residues 1-55 (MTTTFEFLQPRIHGFATCCSSNSLLYSKASRFFNDRCRVYRQNPNRFVSNSITLP) constitute a chloroplast transit peptide. The disordered stretch occupies residues 87–117 (CQEDDQNESSSEEEESSQSTPAKSERKREKK). The segment covering 88-102 (QEDDQNESSSEEEES) has biased composition (acidic residues). Helical transmembrane passes span 134–154 (IIQA…MFVM) and 268–288 (GGFF…AGLI). 365 to 372 (GLPGTGKT) provides a ligand contact to ATP. H590 provides a ligand contact to Zn(2+). E591 is a catalytic residue. Residues H594 and D673 each coordinate Zn(2+).

The protein in the N-terminal section; belongs to the AAA ATPase family. In the C-terminal section; belongs to the peptidase M41 family. The cofactor is Zn(2+).

The protein resides in the plastid. The protein localises to the chloroplast thylakoid membrane. Its function is as follows. Probable ATP-dependent zinc metallopeptidase. The chain is ATP-dependent zinc metalloprotease FTSH 7, chloroplastic (FTSH7) from Arabidopsis thaliana (Mouse-ear cress).